Reading from the N-terminus, the 440-residue chain is MDQLAHHFSEHIVELNRRVAEIIAREKLSGLVIHSGQHHRQFLDDMNYPFKVNPQFKAWVPVIDNPNCWLIVNGRDKPTLVFYRPVDFWHKVSDVPDAFWTEHVDIKLLTKADRVAEFLPKDITNWAYLGEHLDVADVLGFTSRNPDAVMNYLHYHRASKTQYELECMRQANKIAVKGHQAAKNAFYNGGSEFEIQQQYLSSVGQTVNEVPYGNIVALNQNAAILHYTALEHTKPAQRLSFLLDAGANFHGYASDITRTYAFEKNSFCDLISALNAVELAIIDRIKPGVKYTDLHIETHHHIAQLLLDFNLATGDAAGLVDQGITNVFFPHGLGHMLGLQVHDMGGYLHDERGTHIPAPEAHPYLRCTRTLEANQVLTIEPGLYIIDSLLDELKQDSRKQQINWDQVAHFRPFGGIRIEDNVIVHQDRNENMTREFGLID.

Residues aspartate 244, aspartate 255, histidine 335, glutamate 380, and glutamate 419 each coordinate Mn(2+).

Belongs to the peptidase M24B family. Bacterial-type prolidase subfamily. Mn(2+) is required as a cofactor.

The enzyme catalyses Xaa-L-Pro dipeptide + H2O = an L-alpha-amino acid + L-proline. In terms of biological role, splits dipeptides with a prolyl residue in the C-terminal position. The sequence is that of Xaa-Pro dipeptidase from Shewanella denitrificans (strain OS217 / ATCC BAA-1090 / DSM 15013).